The chain runs to 346 residues: Protein RecA (346 aa).

Glycine 64 to threonine 71 contacts ATP.

The protein belongs to the RecA family.

The protein localises to the cytoplasm. Can catalyze the hydrolysis of ATP in the presence of single-stranded DNA, the ATP-dependent uptake of single-stranded DNA by duplex DNA, and the ATP-dependent hybridization of homologous single-stranded DNAs. It interacts with LexA causing its activation and leading to its autocatalytic cleavage. This chain is Protein RecA, found in Bacillus pumilus (strain SAFR-032).